A 161-amino-acid polypeptide reads, in one-letter code: Phosphopantetheine adenylyltransferase (161 aa).

A substrate-binding site is contributed by serine 8. ATP is bound by residues 8–9 and histidine 16; that span reads SF. Positions 40, 72, and 86 each coordinate substrate. ATP is bound by residues 87 to 89, glutamate 97, and 122 to 128; these read GLR and FSFVSSS.

This sequence belongs to the bacterial CoaD family. As to quaternary structure, homohexamer. It depends on Mg(2+) as a cofactor.

The protein resides in the cytoplasm. The enzyme catalyses (R)-4'-phosphopantetheine + ATP + H(+) = 3'-dephospho-CoA + diphosphate. Its pathway is cofactor biosynthesis; coenzyme A biosynthesis; CoA from (R)-pantothenate: step 4/5. Reversibly transfers an adenylyl group from ATP to 4'-phosphopantetheine, yielding dephospho-CoA (dPCoA) and pyrophosphate. In Thermotoga neapolitana (strain ATCC 49049 / DSM 4359 / NBRC 107923 / NS-E), this protein is Phosphopantetheine adenylyltransferase.